Reading from the N-terminus, the 285-residue chain is Polyamine aminopropyltransferase (285 aa).

Positions 5–241 (DNWYIEHFQP…GWWSVTMASK (237 aa)) constitute a PABS domain. S-methyl-5'-thioadenosine is bound at residue Gln-35. Positions 66 and 90 each coordinate spermidine. Residues Asp-110 and 141–142 (DG) contribute to the S-methyl-5'-thioadenosine site. Catalysis depends on Asp-160, which acts as the Proton acceptor. 160–163 (DSTD) lines the spermidine pocket. Pro-167 is a binding site for S-methyl-5'-thioadenosine.

The protein belongs to the spermidine/spermine synthase family. In terms of assembly, homodimer or homotetramer.

The protein localises to the cytoplasm. It carries out the reaction S-adenosyl 3-(methylsulfanyl)propylamine + putrescine = S-methyl-5'-thioadenosine + spermidine + H(+). The protein operates within amine and polyamine biosynthesis; spermidine biosynthesis; spermidine from putrescine: step 1/1. Catalyzes the irreversible transfer of a propylamine group from the amino donor S-adenosylmethioninamine (decarboxy-AdoMet) to putrescine (1,4-diaminobutane) to yield spermidine. The sequence is that of Polyamine aminopropyltransferase from Xanthomonas campestris pv. campestris (strain 8004).